A 494-amino-acid polypeptide reads, in one-letter code: Glycogen synthase (494 aa).

Residue Lys15 coordinates ADP-alpha-D-glucose.

Belongs to the glycosyltransferase 1 family. Bacterial/plant glycogen synthase subfamily.

The catalysed reaction is [(1-&gt;4)-alpha-D-glucosyl](n) + ADP-alpha-D-glucose = [(1-&gt;4)-alpha-D-glucosyl](n+1) + ADP + H(+). Its pathway is glycan biosynthesis; glycogen biosynthesis. In terms of biological role, synthesizes alpha-1,4-glucan chains using ADP-glucose. This chain is Glycogen synthase, found in Albidiferax ferrireducens (strain ATCC BAA-621 / DSM 15236 / T118) (Rhodoferax ferrireducens).